We begin with the raw amino-acid sequence, 288 residues long: Protease HtpX homolog (288 aa).

Helical transmembrane passes span 6–26 (TAFL…YVGG) and 28–48 (QGMM…YFFS). Residue histidine 130 participates in Zn(2+) binding. Glutamate 131 is an active-site residue. Histidine 134 is a binding site for Zn(2+). 2 helical membrane-spanning segments follow: residues 140-160 (ILTG…ANFA) and 179-199 (VIML…QMAI). Residue glutamate 204 coordinates Zn(2+).

Belongs to the peptidase M48B family. It depends on Zn(2+) as a cofactor.

It localises to the cell inner membrane. The protein is Protease HtpX homolog of Campylobacter concisus (strain 13826).